A 432-amino-acid polypeptide reads, in one-letter code: Tubulin-specific chaperone cofactor E-like protein (432 aa).

LRR repeat units lie at residues 69-94 (ASHV…ILKN), 95-117 (LPHL…HELP), 118-140 (VSTL…QSFL), 143-167 (LPKV…EPIS), 168-191 (TTVR…NVVK), 193-217 (FPNV…HFEQ), and 218-242 (LPFW…QLNR). The tract at residues 254–295 (IPLLDALTNEERLHLIIGRLHHLRVLNGSKISSEQREQSERF) is LRRCT. Residues 324–415 (VTIDLTPKKE…GDSFLVQEKI (92 aa)) form a ubiquitin-like (UBL) region.

The protein resides in the cytoplasm. It localises to the cytoskeleton. In terms of biological role, acts as a regulator of tubulin stability. Involved in microtubule-dependent neuronal function. May be involved in tubulin acetylation/deacetylation pathway. This chain is Tubulin-specific chaperone cofactor E-like protein, found in Caenorhabditis elegans.